The following is a 526-amino-acid chain: Peptide chain release factor 3 (526 aa).

The 270-residue stretch at Asn-8 to Gln-277 folds into the tr-type G domain. GTP contacts are provided by residues Ser-17 to Thr-24, Asp-85 to His-89, and Asn-139 to Asp-142.

The protein belongs to the TRAFAC class translation factor GTPase superfamily. Classic translation factor GTPase family. PrfC subfamily.

The protein localises to the cytoplasm. Its function is as follows. Increases the formation of ribosomal termination complexes and stimulates activities of RF-1 and RF-2. It binds guanine nucleotides and has strong preference for UGA stop codons. It may interact directly with the ribosome. The stimulation of RF-1 and RF-2 is significantly reduced by GTP and GDP, but not by GMP. This is Peptide chain release factor 3 from Histophilus somni (strain 2336) (Haemophilus somnus).